The primary structure comprises 828 residues: Periplasmic nitrate reductase 1 (828 aa).

Residues 1–30 (MKMTRRAFVKANAAASAAAVAGITLPASAA) constitute a signal peptide (tat-type signal). Residues 41–97 (IKWDKAPCRFCGTGCSVLVGTQNGRVVATQGDPEAPVNKGLNCIKGYFLSKIMYGKD) enclose the 4Fe-4S Mo/W bis-MGD-type domain. Positions 48, 51, 55, and 83 each coordinate [4Fe-4S] cluster. Residues K85, Q152, N177, C181, 214-221 (WGSNMAEM), 245-249 (STYYH), 264-266 (QTD), M374, Q378, N484, 510-511 (SD), K533, D560, and 718-727 (TGRVLEHWHT) contribute to the Mo-bis(molybdopterin guanine dinucleotide) site. Residue F794 participates in substrate binding. Residues N802 and K819 each contribute to the Mo-bis(molybdopterin guanine dinucleotide) site.

This sequence belongs to the prokaryotic molybdopterin-containing oxidoreductase family. NasA/NapA/NarB subfamily. In terms of assembly, component of the periplasmic nitrate reductase NapAB complex composed of NapA and NapB. [4Fe-4S] cluster is required as a cofactor. It depends on Mo-bis(molybdopterin guanine dinucleotide) as a cofactor. In terms of processing, predicted to be exported by the Tat system. The position of the signal peptide cleavage has not been experimentally proven.

It is found in the periplasm. It catalyses the reaction 2 Fe(II)-[cytochrome] + nitrate + 2 H(+) = 2 Fe(III)-[cytochrome] + nitrite + H2O. In terms of biological role, catalytic subunit of the periplasmic nitrate reductase complex NapAB. Receives electrons from NapB and catalyzes the reduction of nitrate to nitrite. This is Periplasmic nitrate reductase 1 from Photobacterium profundum (strain SS9).